The following is a 182-amino-acid chain: Large ribosomal subunit protein uL5 (182 aa).

The protein belongs to the universal ribosomal protein uL5 family. As to quaternary structure, part of the 50S ribosomal subunit; part of the 5S rRNA/L5/L18/L25 subcomplex. Contacts the 5S rRNA and the P site tRNA. Forms a bridge to the 30S subunit in the 70S ribosome.

Functionally, this is one of the proteins that bind and probably mediate the attachment of the 5S RNA into the large ribosomal subunit, where it forms part of the central protuberance. In the 70S ribosome it contacts protein S13 of the 30S subunit (bridge B1b), connecting the 2 subunits; this bridge is implicated in subunit movement. Contacts the P site tRNA; the 5S rRNA and some of its associated proteins might help stabilize positioning of ribosome-bound tRNAs. This chain is Large ribosomal subunit protein uL5, found in Acidobacterium capsulatum (strain ATCC 51196 / DSM 11244 / BCRC 80197 / JCM 7670 / NBRC 15755 / NCIMB 13165 / 161).